The primary structure comprises 245 residues: tRNA1(Val) (adenine(37)-N6)-methyltransferase (245 aa).

It belongs to the methyltransferase superfamily. tRNA (adenine-N(6)-)-methyltransferase family.

Its subcellular location is the cytoplasm. It carries out the reaction adenosine(37) in tRNA1(Val) + S-adenosyl-L-methionine = N(6)-methyladenosine(37) in tRNA1(Val) + S-adenosyl-L-homocysteine + H(+). Specifically methylates the adenine in position 37 of tRNA(1)(Val) (anticodon cmo5UAC). The sequence is that of tRNA1(Val) (adenine(37)-N6)-methyltransferase from Escherichia coli O157:H7.